The primary structure comprises 110 residues: Guanine nucleotide-binding protein subunit gamma (110 aa).

Cys106 carries S-palmitoyl cysteine lipidation. Position 107 is a cysteine methyl ester (Cys107). Cys107 is lipidated: S-farnesyl cysteine. The propeptide at 108-110 (TLM) is removed in mature form.

This sequence belongs to the G protein gamma family. In terms of assembly, g proteins are composed of 3 units, alpha, beta and gamma. The beta-gamma subunit complex (STE4-STE18 complex) interacts with PLP1 and PLP2.

It localises to the membrane. Functionally, implicated in the pheromone A- and alpha-factor response pathway. The beta and gamma chains of the putative yeast mating response pathway G protein play a positive role in initiation of the mating response. In Saccharomyces cerevisiae (strain ATCC 204508 / S288c) (Baker's yeast), this protein is Guanine nucleotide-binding protein subunit gamma (STE18).